Consider the following 727-residue polypeptide: ABC transporter G family member STR2 (727 aa).

At Met1–Glu475 the chain is on the cytoplasmic side. The ABC transporter domain occupies Leu25–Lys275. Gly69–Ser76 serves as a coordination point for ATP. The helical transmembrane segment at Leu476–His496 threads the bilayer. Topologically, residues Asn497 to Ser510 are extracellular. The helical transmembrane segment at Phe511 to Ile531 threads the bilayer. At Gln532 to His559 the chain is on the cytoplasmic side. The chain crosses the membrane as a helical span at residues Met560–Leu580. Topologically, residues Arg581–Pro583 are extracellular. Residues Phe584–Phe604 form a helical membrane-spanning segment. The Cytoplasmic segment spans residues Val605 to Tyr612. Residues Ile613–Phe633 traverse the membrane as a helical segment. Residues Leu634 to Asn699 lie on the Extracellular side of the membrane. N-linked (GlcNAc...) asparagine glycosylation is present at Asn667. A helical membrane pass occupies residues Val700 to Phe720. The Cytoplasmic segment spans residues Ala721–Ser727.

It belongs to the ABC transporter superfamily. ABCG family. Stunted arbuscule (STR) subfamily. As to quaternary structure, heterodimerizes with STR; the resulting transporter is located in the peri-arbuscular membrane. As to expression, expressed constitutively in the vascular tissue of roots.

It localises to the cell membrane. Its function is as follows. Together with STR, required for arbuscule development in arbuscular mycorrhizal symbiosis. The protein is ABC transporter G family member STR2 of Medicago truncatula (Barrel medic).